We begin with the raw amino-acid sequence, 129 residues long: Glycine cleavage system H protein (129 aa).

In terms of domain architecture, Lipoyl-binding spans 24 to 106 (TYTVGITEHA…YGQGWIFKIK (83 aa)). Lys-65 is subject to N6-lipoyllysine.

This sequence belongs to the GcvH family. As to quaternary structure, the glycine cleavage system is composed of four proteins: P, T, L and H. (R)-lipoate is required as a cofactor.

The glycine cleavage system catalyzes the degradation of glycine. The H protein shuttles the methylamine group of glycine from the P protein to the T protein. The sequence is that of Glycine cleavage system H protein from Cronobacter sakazakii (strain ATCC BAA-894) (Enterobacter sakazakii).